The following is a 161-amino-acid chain: 2-C-methyl-D-erythritol 2,4-cyclodiphosphate synthase (161 aa).

2 residues coordinate a divalent metal cation: D8 and H10. 4-CDP-2-C-methyl-D-erythritol 2-phosphate-binding positions include 8–10 (DLH) and 34–35 (HS). Residue H42 coordinates a divalent metal cation. 4-CDP-2-C-methyl-D-erythritol 2-phosphate-binding positions include 56 to 58 (DIG), 100 to 106 (AEYPKML), and R142.

It belongs to the IspF family. In terms of assembly, homotrimer. A divalent metal cation serves as cofactor.

The catalysed reaction is 4-CDP-2-C-methyl-D-erythritol 2-phosphate = 2-C-methyl-D-erythritol 2,4-cyclic diphosphate + CMP. Its pathway is isoprenoid biosynthesis; isopentenyl diphosphate biosynthesis via DXP pathway; isopentenyl diphosphate from 1-deoxy-D-xylulose 5-phosphate: step 4/6. Functionally, involved in the biosynthesis of isopentenyl diphosphate (IPP) and dimethylallyl diphosphate (DMAPP), two major building blocks of isoprenoid compounds. Catalyzes the conversion of 4-diphosphocytidyl-2-C-methyl-D-erythritol 2-phosphate (CDP-ME2P) to 2-C-methyl-D-erythritol 2,4-cyclodiphosphate (ME-CPP) with a corresponding release of cytidine 5-monophosphate (CMP). This chain is 2-C-methyl-D-erythritol 2,4-cyclodiphosphate synthase, found in Buchnera aphidicola subsp. Acyrthosiphon pisum (strain 5A).